A 284-amino-acid polypeptide reads, in one-letter code: Acetyl-coenzyme A carboxylase carboxyl transferase subunit beta (284 aa).

Residues 25-284 (LWVKCPETGA…LCKILTKSVQ (260 aa)) enclose the CoA carboxyltransferase N-terminal domain.

Belongs to the AccD/PCCB family. As to quaternary structure, acetyl-CoA carboxylase is a heterohexamer composed of biotin carboxyl carrier protein (AccB), biotin carboxylase (AccC) and two subunits each of ACCase subunit alpha (AccA) and ACCase subunit beta (AccD).

Its subcellular location is the cytoplasm. The enzyme catalyses N(6)-carboxybiotinyl-L-lysyl-[protein] + acetyl-CoA = N(6)-biotinyl-L-lysyl-[protein] + malonyl-CoA. The protein operates within lipid metabolism; malonyl-CoA biosynthesis; malonyl-CoA from acetyl-CoA: step 1/1. In terms of biological role, component of the acetyl coenzyme A carboxylase (ACC) complex. Biotin carboxylase (BC) catalyzes the carboxylation of biotin on its carrier protein (BCCP) and then the CO(2) group is transferred by the transcarboxylase to acetyl-CoA to form malonyl-CoA. The protein is Acetyl-coenzyme A carboxylase carboxyl transferase subunit beta of Liberibacter asiaticus (strain psy62).